Here is a 332-residue protein sequence, read N- to C-terminus: Lipoyl synthase (332 aa).

Positions 79, 84, 90, 105, 109, 112, and 319 each coordinate [4Fe-4S] cluster. A Radical SAM core domain is found at 91 to 308; sequence FSHGTATFMI…ADYGYEIGFK (218 aa).

It belongs to the radical SAM superfamily. Lipoyl synthase family. The cofactor is [4Fe-4S] cluster.

It is found in the cytoplasm. The catalysed reaction is [[Fe-S] cluster scaffold protein carrying a second [4Fe-4S](2+) cluster] + N(6)-octanoyl-L-lysyl-[protein] + 2 oxidized [2Fe-2S]-[ferredoxin] + 2 S-adenosyl-L-methionine + 4 H(+) = [[Fe-S] cluster scaffold protein] + N(6)-[(R)-dihydrolipoyl]-L-lysyl-[protein] + 4 Fe(3+) + 2 hydrogen sulfide + 2 5'-deoxyadenosine + 2 L-methionine + 2 reduced [2Fe-2S]-[ferredoxin]. It participates in protein modification; protein lipoylation via endogenous pathway; protein N(6)-(lipoyl)lysine from octanoyl-[acyl-carrier-protein]: step 2/2. Catalyzes the radical-mediated insertion of two sulfur atoms into the C-6 and C-8 positions of the octanoyl moiety bound to the lipoyl domains of lipoate-dependent enzymes, thereby converting the octanoylated domains into lipoylated derivatives. The polypeptide is Lipoyl synthase (Hahella chejuensis (strain KCTC 2396)).